The primary structure comprises 121 residues: Large ribosomal subunit protein uL14 (121 aa).

This sequence belongs to the universal ribosomal protein uL14 family. In terms of assembly, part of the 50S ribosomal subunit. Forms a cluster with proteins L3 and L19. In the 70S ribosome, L14 and L19 interact and together make contacts with the 16S rRNA in bridges B5 and B8.

Functionally, binds to 23S rRNA. Forms part of two intersubunit bridges in the 70S ribosome. The polypeptide is Large ribosomal subunit protein uL14 (Prochlorococcus marinus (strain SARG / CCMP1375 / SS120)).